The following is a 251-amino-acid chain: Probable-ribose 5-phosphate isomerase (251 aa).

It belongs to the ribose 5-phosphate isomerase family.

The enzyme catalyses aldehydo-D-ribose 5-phosphate = D-ribulose 5-phosphate. It functions in the pathway carbohydrate degradation; pentose phosphate pathway; D-ribose 5-phosphate from D-ribulose 5-phosphate (non-oxidative stage): step 1/1. The chain is Probable-ribose 5-phosphate isomerase (rpia-1) from Caenorhabditis elegans.